Here is a 72-residue protein sequence, read N- to C-terminus: DNA-directed RNA polymerase subunit Rpo10 (72 aa).

Residues cysteine 7, cysteine 10, cysteine 53, and cysteine 54 each coordinate Zn(2+).

It belongs to the archaeal Rpo10/eukaryotic RPB10 RNA polymerase subunit family. Part of the RNA polymerase complex. Zn(2+) is required as a cofactor.

The protein resides in the cytoplasm. It catalyses the reaction RNA(n) + a ribonucleoside 5'-triphosphate = RNA(n+1) + diphosphate. Functionally, DNA-dependent RNA polymerase (RNAP) catalyzes the transcription of DNA into RNA using the four ribonucleoside triphosphates as substrates. This is DNA-directed RNA polymerase subunit Rpo10 from Thermoplasma volcanium (strain ATCC 51530 / DSM 4299 / JCM 9571 / NBRC 15438 / GSS1).